A 229-amino-acid polypeptide reads, in one-letter code: NAD(P)H-hydrate epimerase (229 aa).

Residues Tyr11–Thr222 form the YjeF N-terminal domain. (6S)-NADPHX is bound at residue Asn59–Asp63. 2 residues coordinate K(+): Asn60 and Asp124. (6S)-NADPHX is bound by residues Gly128–Ala136 and Asp164. Ser167 serves as a coordination point for K(+).

Belongs to the NnrE/AIBP family. The cofactor is K(+).

The catalysed reaction is (6R)-NADHX = (6S)-NADHX. It carries out the reaction (6R)-NADPHX = (6S)-NADPHX. Catalyzes the epimerization of the S- and R-forms of NAD(P)HX, a damaged form of NAD(P)H that is a result of enzymatic or heat-dependent hydration. This is a prerequisite for the S-specific NAD(P)H-hydrate dehydratase to allow the repair of both epimers of NAD(P)HX. The protein is NAD(P)H-hydrate epimerase of Clavibacter sepedonicus (Clavibacter michiganensis subsp. sepedonicus).